Consider the following 55-residue polypeptide: Neurotoxin B-IV (55 aa).

A Hydroxyproline modification is found at Pro-10. 4 cysteine pairs are disulfide-bonded: Cys-12/Cys-52, Cys-16/Cys-48, Cys-23/Cys-41, and Cys-26/Cys-37.

It belongs to the worm B-toxin family.

It is found in the secreted. Functionally, this toxin increases the excitability of nerves by delaying the inactivation of the voltage-gated sodium channel (Nav). Only acts on some crustacean. Is more abundant, but 15-fold less toxic than neurotoxin B-II. The chain is Neurotoxin B-IV from Cerebratulus lacteus (Milky ribbon worm).